The chain runs to 232 residues: MSKLDDELSRIAHRANYLPQREAYERMRVERTGANDRLVAVQIALEDVDTQVFLLESEIDAMRQREDRDRLLLNSGATDAKQLSDLQPEFGTWQRRKNSLEDSLREVMKRRGELQDQLTAELGAIERMQTDLVGARQTLDVAFAEIDQVGQPHSSQCDVLIAELAPALSAPYERLCAGGGLGVGQLQGHRCGACRSEIGRGELSCISVDVDDEVVKYPESGAIQLLDKGFFQ.

Residues 89 to 140 adopt a coiled-coil conformation; it reads EFGTWQRRKNSLEDSLREVMKRRGELQDQLTAELGAIERMQTDLVGARQTLD.

This is an uncharacterized protein from Mycobacterium leprae (strain TN).